The sequence spans 603 residues: MNLSNISAVKVLTLVVSAAIAGQVCAAESIVNYESANAISKQPEGSVRFIVKYKDGTPSSQGLKTRSTTKVMASGMQVAGFEAQFVRTTGLGAGIFAVPELKTTKEAHLVMDTIASNPDVEFVEVDRLAYPKAAPNDPSYRQQWHYFGNYGVKANKVWDRGFTGQGVVVSVVDTGILDHVDLNGNMLPGYDFISSAPNARDGDQRDNNPADEGDWFDNWDCGGYPDPRREKKFSTWHGSHVAGTIAAVTNNGVGVAGVAYGAKVIPVRVLGKCGGYDSDITDGMYWSAGGHIDGVPDNQNPAQVVNMSLGGGGGCSQNSQRMIDKTTNLGALIVIAAGNENQDASRTWPSSCNNVLSVGATTPKGKRAPFSNYGARVHLAAPGTNILSTIDVGQAGPVRSSYGMKAGTSMAAPHVSGVAALVISAANSIGKTLTPSELSDILVRTTSRFNGRLDRGLGSGIVDANAAVNAVLGDQNRAQPRPPVNQPINSGNKVYRSDRRVAIRDLRSVTSGIRVNDQARVGSANITLTLDIRYGDRSQLAVELIAPSGRVYPIYHDGKRQPNIVGPATFSVKNERLQGTWTLKVTDKARGVTGSIDSWSLTF.

A signal peptide spans 1 to 21 (MNLSNISAVKVLTLVVSAAIA). A propeptide spanning residues 22 to 132 (GQVCAAESIV…VEVDRLAYPK (111 aa)) is cleaved from the precursor. In terms of domain architecture, Peptidase S8 spans 143-468 (QWHYFGNYGV…SGIVDANAAV (326 aa)). Residue Asp173 is the Charge relay system of the active site. The segment at 197 to 221 (PNARDGDQRDNNPADEGDWFDNWDC) is disordered. 2 disulfides stabilise this stretch: Cys221/Cys273 and Cys315/Cys352. The active-site Charge relay system is His237. Catalysis depends on Ser409, which acts as the Charge relay system. Positions 477–603 (RAQPRPPVNQ…GSIDSWSLTF (127 aa)) are excised as a propeptide. Positions 478–603 (AQPRPPVNQP…GSIDSWSLTF (126 aa)) constitute a P/Homo B domain.

It belongs to the peptidase S8 family.

The protein localises to the secreted. The protein is Extracellular basic protease (bprV) of Dichelobacter nodosus (Bacteroides nodosus).